The sequence spans 108 residues: Small ribosomal subunit protein uS10 (108 aa).

The protein belongs to the universal ribosomal protein uS10 family. In terms of assembly, part of the 30S ribosomal subunit.

In terms of biological role, involved in the binding of tRNA to the ribosomes. The sequence is that of Small ribosomal subunit protein uS10 from Rhodopirellula baltica (strain DSM 10527 / NCIMB 13988 / SH1).